Here is a 508-residue protein sequence, read N- to C-terminus: Carboxypeptidase Y homolog ARB_05721 (508 aa).

An N-terminal signal peptide occupies residues 1 to 25; the sequence is MELYLNMLSFWYILLATSFFGPSQA. Residues asparagine 132 and asparagine 169 are each glycosylated (N-linked (GlcNAc...) asparagine). Residue serine 204 is part of the active site. The N-linked (GlcNAc...) asparagine glycan is linked to asparagine 268. Disulfide bonds link cysteine 282-cysteine 305, cysteine 289-cysteine 298, and cysteine 332-cysteine 338. Aspartate 410 is a catalytic residue. Cysteine 413 contributes to the substrate binding site. The N-linked (GlcNAc...) asparagine glycan is linked to asparagine 451. Histidine 484 is a catalytic residue. Position 485 (methionine 485) interacts with substrate.

The protein belongs to the peptidase S10 family.

Its subcellular location is the secreted. The enzyme catalyses Release of a C-terminal amino acid with broad specificity.. In terms of biological role, involved in degradation of small peptides. This is Carboxypeptidase Y homolog ARB_05721 from Arthroderma benhamiae (strain ATCC MYA-4681 / CBS 112371) (Trichophyton mentagrophytes).